Reading from the N-terminus, the 167-residue chain is Small ribosomal subunit protein uS5 (167 aa).

The S5 DRBM domain maps to 12–75; that stretch reads LREKLITINR…ERARGGMRTV (64 aa).

It belongs to the universal ribosomal protein uS5 family. As to quaternary structure, part of the 30S ribosomal subunit. Contacts proteins S4 and S8.

Its function is as follows. With S4 and S12 plays an important role in translational accuracy. Located at the back of the 30S subunit body where it stabilizes the conformation of the head with respect to the body. The chain is Small ribosomal subunit protein uS5 from Halorhodospira halophila (strain DSM 244 / SL1) (Ectothiorhodospira halophila (strain DSM 244 / SL1)).